We begin with the raw amino-acid sequence, 330 residues long: MLTSAKILLISILSSLLLFGSHGEEGQKTNTTESTAEDLKTMENQSVPLESKANLTSDKENRETSNPKASNFSFEDPSNKTHETGFYSNLSTDNSSRSPSLMPTLSPRSPSTHSFVSKLPWNSSIADNSLLPASAPPNTTVPVSSENFTLSSINDTMKAPDNSSITVSNLPSGPNTTSVTPMVTEGWPTTTRESMEGFTVYQETTLHPTLKFTNNSKIFPNTSDPQEENRNTGVVFGAILGAILGASLLSLVGYLLCGKRKTDSFSHRRLYDDRNEPVLRLDNAPEPYDMSFGNSSYYNPTANDSSTSAGGENAHDSIPMDDIPPLRTSV.

The first 23 residues, Met1–Gly23, serve as a signal peptide directing secretion. The disordered stretch occupies residues Gly23–Phe115. Residues Glu24–Thr232 are Extracellular-facing. Asn30, Asn44, Asn54, Asn71, Asn79, Asn89, Asn94, Asn122, Asn138, Asn147, Asn154, Asn162, Asn175, Asn214, and Asn221 each carry an N-linked (GlcNAc...) asparagine glycan. A compositionally biased stretch (polar residues) spans Met42–Thr56. Residues Phe86–Phe115 are compositionally biased toward polar residues. The segment at Ser164–Glu185 is disordered. The chain crosses the membrane as a helical span at residues Gly233 to Gly253. Over Tyr254–Val330 the chain is Cytoplasmic. Residues Leu279 to Val330 form a disordered region. Residues Phe292 to Gly310 show a composition bias toward polar residues.

Highly glycosylated (N- and O-linked carbohydrates). Mainly expressed on apical surfaces of the mammary epithelial cells.

It localises to the cell membrane. It is found in the secreted. In Bos taurus (Bovine), this protein is Mucin-15 (MUC15).